A 134-amino-acid chain; its full sequence is Holo-[acyl-carrier-protein] synthase (134 aa).

Mg(2+) contacts are provided by aspartate 8 and glutamate 57.

This sequence belongs to the P-Pant transferase superfamily. AcpS family. Requires Mg(2+) as cofactor.

It localises to the cytoplasm. The enzyme catalyses apo-[ACP] + CoA = holo-[ACP] + adenosine 3',5'-bisphosphate + H(+). In terms of biological role, transfers the 4'-phosphopantetheine moiety from coenzyme A to a Ser of acyl-carrier-protein. The sequence is that of Holo-[acyl-carrier-protein] synthase from Rhizobium etli (strain CIAT 652).